The sequence spans 252 residues: Chitooligosaccharide deacetylase (252 aa).

Mg(2+)-binding residues include His61 and His125.

It belongs to the YdjC deacetylase family. ChbG subfamily. Homodimer. It depends on Mg(2+) as a cofactor.

It is found in the cytoplasm. It carries out the reaction N,N'-diacetylchitobiose + H2O = N-acetyl-beta-D-glucosaminyl-(1-&gt;4)-D-glucosamine + acetate. The catalysed reaction is diacetylchitobiose-6'-phosphate + H2O = N'-monoacetylchitobiose-6'-phosphate + acetate. It participates in glycan degradation; chitin degradation. In terms of biological role, involved in the degradation of chitin. ChbG is essential for growth on the acetylated chitooligosaccharides chitobiose and chitotriose but is dispensable for growth on cellobiose and chitosan dimer, the deacetylated form of chitobiose. Deacetylation of chitobiose-6-P and chitotriose-6-P is necessary for both the activation of the chb promoter by the regulatory protein ChbR and the hydrolysis of phosphorylated beta-glucosides by the phospho-beta-glucosidase ChbF. Catalyzes the removal of only one acetyl group from chitobiose-6-P to yield monoacetylchitobiose-6-P, the inducer of ChbR and the substrate of ChbF. This chain is Chitooligosaccharide deacetylase, found in Escherichia coli O8 (strain IAI1).